Consider the following 119-residue polypeptide: Phosphoribosyl-AMP cyclohydrolase (119 aa).

Asp-72 contributes to the Mg(2+) binding site. Cys-73 is a binding site for Zn(2+). Residues Asp-74 and Asp-76 each coordinate Mg(2+). Cys-89 and Cys-96 together coordinate Zn(2+).

The protein belongs to the PRA-CH family. As to quaternary structure, homodimer. It depends on Mg(2+) as a cofactor. Zn(2+) is required as a cofactor.

The protein resides in the cytoplasm. It carries out the reaction 1-(5-phospho-beta-D-ribosyl)-5'-AMP + H2O = 1-(5-phospho-beta-D-ribosyl)-5-[(5-phospho-beta-D-ribosylamino)methylideneamino]imidazole-4-carboxamide. It functions in the pathway amino-acid biosynthesis; L-histidine biosynthesis; L-histidine from 5-phospho-alpha-D-ribose 1-diphosphate: step 3/9. Catalyzes the hydrolysis of the adenine ring of phosphoribosyl-AMP. The protein is Phosphoribosyl-AMP cyclohydrolase of Methanocella arvoryzae (strain DSM 22066 / NBRC 105507 / MRE50).